The sequence spans 451 residues: Histone acetyltransferase type B catalytic subunit (451 aa).

Interaction with histone H4 N-terminus stretches follow at residues D52–E54 and Y202–Y204. Acetyl-CoA contacts are provided by residues Y241 to I243 and Q248 to G254. Residue E276 is the Proton donor/acceptor of the active site.

This sequence belongs to the HAT1 family. In terms of assembly, component of the HAT-B complex composed of at least HAT1 and HAT2. The HAT-B complex binds to histone H4 tail.

The protein localises to the cytoplasm. It is found in the nucleus. The enzyme catalyses L-lysyl-[protein] + acetyl-CoA = N(6)-acetyl-L-lysyl-[protein] + CoA + H(+). In terms of biological role, catalytic component of the histone acetylase B (HAT-B) complex. Acetylates 'Lys-12' of histone H4 which is required for telomeric silencing. Has intrinsic substrate specificity that modifies lysine in recognition sequence GXGKXG. Involved in DNA double-strand break repair. The protein is Histone acetyltransferase type B catalytic subunit (HAT1) of Yarrowia lipolytica (strain CLIB 122 / E 150) (Yeast).